The chain runs to 233 residues: PEP2-like protein NECHADRAFT_97050 (233 aa).

This sequence belongs to the PEP2 family.

Functionally, may contribute to the ability of the fungus to cause disease on pea plants. This chain is PEP2-like protein NECHADRAFT_97050, found in Fusarium vanettenii (strain ATCC MYA-4622 / CBS 123669 / FGSC 9596 / NRRL 45880 / 77-13-4) (Fusarium solani subsp. pisi).